The following is a 245-amino-acid chain: MSQSKFALPRNGFTFKQFFVAHDRCAMKVGTDGILLGAWAPIAGVKHVLDIGAGSGLLALMLAQRTDHDVQVDAVELDEEAAAQARENALASPWSSRIEVCQADIHQWQPSQTRRYELIISNPPFFAEGVPCATSQREQARYTTTLDHASLLTCAAEHITEEGFFCVVLPVDIGNAFIERATAMGWHLRLRTDVAETELRPPHRVLLAFSPTAGECFCDRLAIRGPEQQYSEGFTALTGDFYLFM.

It belongs to the methyltransferase superfamily. tRNA (adenine-N(6)-)-methyltransferase family.

It is found in the cytoplasm. It carries out the reaction adenosine(37) in tRNA1(Val) + S-adenosyl-L-methionine = N(6)-methyladenosine(37) in tRNA1(Val) + S-adenosyl-L-homocysteine + H(+). Its function is as follows. Specifically methylates the adenine in position 37 of tRNA(1)(Val) (anticodon cmo5UAC). This Klebsiella pneumoniae (strain 342) protein is tRNA1(Val) (adenine(37)-N6)-methyltransferase.